A 507-amino-acid chain; its full sequence is ATP synthase subunit alpha, chloroplastic (507 aa).

Position 170–177 (170–177) interacts with ATP; sequence GDRQTGKT.

This sequence belongs to the ATPase alpha/beta chains family. F-type ATPases have 2 components, CF(1) - the catalytic core - and CF(0) - the membrane proton channel. CF(1) has five subunits: alpha(3), beta(3), gamma(1), delta(1), epsilon(1). CF(0) has four main subunits: a, b, b' and c.

It is found in the plastid. The protein localises to the chloroplast thylakoid membrane. It carries out the reaction ATP + H2O + 4 H(+)(in) = ADP + phosphate + 5 H(+)(out). Produces ATP from ADP in the presence of a proton gradient across the membrane. The alpha chain is a regulatory subunit. The chain is ATP synthase subunit alpha, chloroplastic from Ceratophyllum demersum (Rigid hornwort).